The primary structure comprises 147 residues: uncharacterized protein (147 aa).

Positions 51 to 72 (VTSSMSVMNDSEECPLINGPSM) are disordered.

This is an uncharacterized protein from Gallid herpesvirus 2 (strain GA) (GaHV-2).